A 396-amino-acid chain; its full sequence is S-adenosylmethionine synthase 4 (396 aa).

Mg(2+) is bound at residue Glu13. His19 contributes to the ATP binding site. Glu47 serves as a coordination point for K(+). The L-methionine site is built by Glu60 and Gln103. Residues Asp171–Lys173, Ser239–Phe242, Asp250, Arg256–Lys257, Ala273, Lys277, and Lys281 contribute to the ATP site. Asp250 is an L-methionine binding site. Lys281 contacts L-methionine.

It belongs to the AdoMet synthase family. As to quaternary structure, homotetramer. Mn(2+) is required as a cofactor. The cofactor is Mg(2+). It depends on Co(2+) as a cofactor. K(+) serves as cofactor. In terms of tissue distribution, expressed in roots, stems and leaves (at protein level).

The protein resides in the cytoplasm. It carries out the reaction L-methionine + ATP + H2O = S-adenosyl-L-methionine + phosphate + diphosphate. It functions in the pathway amino-acid biosynthesis; S-adenosyl-L-methionine biosynthesis; S-adenosyl-L-methionine from L-methionine: step 1/1. Functionally, catalyzes the formation of S-adenosylmethionine from methionine and ATP. The reaction comprises two steps that are both catalyzed by the same enzyme: formation of S-adenosylmethionine (AdoMet) and triphosphate, and subsequent hydrolysis of the triphosphate. May be involved in the synthesis of betain in response to abiotic stress such as high salinity. This Atriplex nummularia (Old man saltbush) protein is S-adenosylmethionine synthase 4 (SAMS4).